The sequence spans 121 residues: Small ribosomal subunit protein uS13 (121 aa).

Residues 94–121 are disordered; sequence GLPVRGQRTRTNARTRKGKRKTVAGKKK.

It belongs to the universal ribosomal protein uS13 family. In terms of assembly, part of the 30S ribosomal subunit. Forms a loose heterodimer with protein S19. Forms two bridges to the 50S subunit in the 70S ribosome.

Located at the top of the head of the 30S subunit, it contacts several helices of the 16S rRNA. In the 70S ribosome it contacts the 23S rRNA (bridge B1a) and protein L5 of the 50S subunit (bridge B1b), connecting the 2 subunits; these bridges are implicated in subunit movement. Contacts the tRNAs in the A and P-sites. The polypeptide is Small ribosomal subunit protein uS13 (Treponema pallidum (strain Nichols)).